A 334-amino-acid polypeptide reads, in one-letter code: Cathepsin R (334 aa).

Positions 1–17 are cleaved as a signal peptide; that stretch reads MAAVVFIAFLYLGVASG. A propeptide spans 18-114 (activation peptide); that stretch reads VPVLDSSLDA…SIMKREAGSI (97 aa). 2 disulfide bridges follow: C136–C179 and C170–C212. Residue C139 is part of the active site. A glycan (N-linked (GlcNAc...) asparagine) is linked at N269. Cysteines 270 and 323 form a disulfide. Residues H277 and N301 contribute to the active site.

This sequence belongs to the peptidase C1 family. Placenta.

Its subcellular location is the lysosome. The sequence is that of Cathepsin R (Ctsr) from Mus musculus (Mouse).